Here is a 156-residue protein sequence, read N- to C-terminus: MSQLTHLDDSGAAHMVDVGGKPATERLARAGGTIRMSAEALAAIKAGDAPKGDVLGTARIAGIMAAKKTGELIPLCHPLALDAVDVAFEFGEREIAVTATASLTGKTGVEMEALTAASVALLTIYDMAKALDKGMVIEGLRLLEKRGGKSGHWIAK.

Substrate contacts are provided by residues 75 to 77 (LCH) and 111 to 112 (ME). The active site involves Asp-126.

It belongs to the MoaC family. As to quaternary structure, homohexamer; trimer of dimers.

It carries out the reaction (8S)-3',8-cyclo-7,8-dihydroguanosine 5'-triphosphate = cyclic pyranopterin phosphate + diphosphate. It participates in cofactor biosynthesis; molybdopterin biosynthesis. Its function is as follows. Catalyzes the conversion of (8S)-3',8-cyclo-7,8-dihydroguanosine 5'-triphosphate to cyclic pyranopterin monophosphate (cPMP). The polypeptide is Cyclic pyranopterin monophosphate synthase (Erythrobacter litoralis (strain HTCC2594)).